The primary structure comprises 74 residues: MRGIYICLVFVLVCGLVSGLADVPAESEMAHLRVRRGFGCPFNQGACHRHCRSIRRRGGYCAGLIKQTCTCYRN.

The N-terminal stretch at 1–21 (MRGIYICLVFVLVCGLVSGLA) is a signal peptide. Residues 22 to 34 (DVPAESEMAHLRV) constitute a propeptide that is removed on maturation. Cystine bridges form between Cys40–Cys61, Cys47–Cys69, and Cys51–Cys71.

Expressed in the hemocytes, fat body and ovaries.

It is found in the secreted. Its function is as follows. Antibacterial peptide mostly active against Gram-positive bacteria. The sequence is that of Defensin from Rhipicephalus microplus (Cattle tick).